The sequence spans 389 residues: Zinc finger C2HC domain-containing protein 1C homolog (389 aa).

Disordered stretches follow at residues 16 to 44 and 84 to 115; these read MLPHNTTEAPGPHSAKQDSYEQGDSSQQS and SYPHCTGISQQDPESDSQGQGKGLFYSSGPQS. Composition is skewed to polar residues over residues 35 to 44 and 90 to 102; these read YEQGDSSQQS and GISQQDPESDSQG. Residues 211–266 adopt a coiled-coil conformation; the sequence is VQIRRLEAAGESLEEEIRRKQILLRGKLKKTEEELRRIQMQKEQAKENENRELQKI. Disordered stretches follow at residues 301-320 and 343-389; these read REDETWGRSQQNSSPFQLSD and SELS…PQLG. A compositionally biased stretch (polar residues) spans 307-317; it reads GRSQQNSSPFQ. A compositionally biased stretch (low complexity) spans 368 to 382; the sequence is SSLSMAPDSSGSSGS.

Belongs to the ZC2HC1 family.

The polypeptide is Zinc finger C2HC domain-containing protein 1C homolog (ZC2HC1C) (Pongo abelii (Sumatran orangutan)).